We begin with the raw amino-acid sequence, 288 residues long: UTP--glucose-1-phosphate uridylyltransferase (288 aa).

Belongs to the UDPGP type 2 family.

It catalyses the reaction alpha-D-glucose 1-phosphate + UTP + H(+) = UDP-alpha-D-glucose + diphosphate. It functions in the pathway glycolipid metabolism; diglucosyl-diacylglycerol biosynthesis. In terms of biological role, catalyzes the formation of UDP-glucose from glucose-1-phosphate and UTP. This is an intermediate step in the biosynthesis of diglucosyl-diacylglycerol (Glc2-DAG), i.e. a glycolipid found in the membrane, which is also used as a membrane anchor for lipoteichoic acid (LTA). The chain is UTP--glucose-1-phosphate uridylyltransferase (gtaB) from Staphylococcus haemolyticus (strain JCSC1435).